The chain runs to 551 residues: Cytochrome P450 monooxygenase FCK2 (551 aa).

The next 3 helical transmembrane spans lie at 8-28, 35-55, and 69-89; these read FDPANYSLFFVLGVLTHVFIF, LHVFNILQAFAVLESSLVYIV, and VTTISSCFTLSTLMGLLISIL. N-linked (GlcNAc...) asparagine glycosylation occurs at asparagine 258. Residue cysteine 493 coordinates heme.

It belongs to the cytochrome P450 family. It depends on heme as a cofactor.

It localises to the membrane. It participates in secondary metabolite biosynthesis. Its function is as follows. Cytochrome P450 monooxygenase; part of the gene cluster that mediates the biosynthesis of cytokinins such as fusatin, fusatinic acids or 8-oxofusatin, known for their growth promoting and anti-senescence activities toward host plants. FCK1 is a bifunctional enzyme that performs the first steps in the biosynthesis of Fusarium cytokinins. It first condenses adenosine monophosphate (AMP) with dimethylallyl diphosphate (DMAPP) to yield isoprenyl adenosine monophosphate. It then catalyzes the removal of the phosphoribose to produce isopentenylaldehyde. The cytochrome P450 monooxygenase then converts isopentenylaldehyde to trans-zeatin. A condensation step converts trans-zeatin to fusatin which is further modified to produce fusatinic acid. The mechanism for oxidation of fusatin to fusatinic acid remains unknown. 8-oxofusatin could be produced through several pathways, via direct oxygenation of fusatin, or via the 8-oxo-pentenyladenine intermediate which itself must arise from either the prenylation of 8-oxo-AMP by FCK1 and/or oxygenation of isopentenylaldehyde. Both the FCK3 and FCK4 enzymes act downstream of the identified cytokinins to produce yet unidentified compounds. The sequence is that of Cytochrome P450 monooxygenase FCK2 from Fusarium pseudograminearum (strain CS3096) (Wheat and barley crown-rot fungus).